The following is a 414-amino-acid chain: Succinylornithine transaminase (414 aa).

Residue Lys260 is modified to N6-(pyridoxal phosphate)lysine.

This sequence belongs to the class-III pyridoxal-phosphate-dependent aminotransferase family. AstC subfamily. Pyridoxal 5'-phosphate is required as a cofactor.

The enzyme catalyses N(2)-succinyl-L-ornithine + 2-oxoglutarate = N-succinyl-L-glutamate 5-semialdehyde + L-glutamate. It participates in amino-acid degradation; L-arginine degradation via AST pathway; L-glutamate and succinate from L-arginine: step 3/5. Its function is as follows. Catalyzes the transamination of N(2)-succinylornithine and alpha-ketoglutarate into N(2)-succinylglutamate semialdehyde and glutamate. Can also act as an acetylornithine aminotransferase. In Yersinia enterocolitica serotype O:8 / biotype 1B (strain NCTC 13174 / 8081), this protein is Succinylornithine transaminase.